The following is a 160-amino-acid chain: Large ribosomal subunit protein uL22c (160 aa).

The protein belongs to the universal ribosomal protein uL22 family. Part of the 50S ribosomal subunit.

Its subcellular location is the plastid. It is found in the chloroplast. Functionally, this protein binds specifically to 23S rRNA. The globular domain of the protein is located near the polypeptide exit tunnel on the outside of the subunit, while an extended beta-hairpin is found that lines the wall of the exit tunnel in the center of the 70S ribosome. This Crucihimalaya wallichii (Rock-cress) protein is Large ribosomal subunit protein uL22c (rpl22).